The primary structure comprises 503 residues: 2-phosphoxylose phosphatase 1 (503 aa).

Residues 1 to 6 lie on the Cytoplasmic side of the membrane; that stretch reads MLARSR. Residues 7–27 traverse the membrane as a helical; Signal-anchor for type II membrane protein segment; that stretch reads FILVLVVGALLAVLSFSLQYL. At 28 to 503 the chain is on the lumenal side; that stretch reads HLIPTNPVAE…YQQACHQTVL (476 aa). The interval 38-63 is disordered; that stretch reads QRSAGRSRKRVNPVLHTDPPAPDPIR. Asn-73 carries an N-linked (GlcNAc...) asparagine glycan. His-98 functions as the Nucleophile in the catalytic mechanism. A glycan (N-linked (GlcNAc...) asparagine) is linked at Asn-365. Residue Asp-396 is the Proton donor of the active site. A glycan (N-linked (GlcNAc...) asparagine) is linked at Asn-490.

The protein belongs to the histidine acid phosphatase family.

Its subcellular location is the golgi apparatus membrane. It catalyses the reaction 3-O-[beta-D-GlcA-(1-&gt;3)-beta-D-Gal-(1-&gt;3)-beta-D-Gal-(1-&gt;4)-beta-D-2-O-P-Xyl]-L-seryl-[protein] + H2O = 3-O-(beta-D-GlcA-(1-&gt;3)-beta-D-Gal-(1-&gt;3)-beta-D-Gal-(1-&gt;4)-beta-D-Xyl)-L-seryl-[protein] + phosphate. In terms of biological role, responsible for the 2-O-dephosphorylation of xylose in the glycosaminoglycan-protein linkage region of proteoglycans thereby regulating the amount of mature glycosaminoglycan (GAG) chains. Sulfated glycosaminoglycans (GAGs), including heparan sulfate and chondroitin sulfate, are synthesized on the so-called common GAG-protein linkage region (GlcUAbeta1-3Galbeta1-3Galbeta1-4Xylbeta1-O-Ser) of core proteins, which is formed by the stepwise addition of monosaccharide residues by the respective specific glycosyltransferases. In Danio rerio (Zebrafish), this protein is 2-phosphoxylose phosphatase 1.